The primary structure comprises 406 residues: NADH-quinone oxidoreductase subunit D (406 aa).

The protein belongs to the complex I 49 kDa subunit family. As to quaternary structure, NDH-1 is composed of 14 different subunits. Subunits NuoB, C, D, E, F, and G constitute the peripheral sector of the complex.

Its subcellular location is the cell inner membrane. It carries out the reaction a quinone + NADH + 5 H(+)(in) = a quinol + NAD(+) + 4 H(+)(out). In terms of biological role, NDH-1 shuttles electrons from NADH, via FMN and iron-sulfur (Fe-S) centers, to quinones in the respiratory chain. The immediate electron acceptor for the enzyme in this species is believed to be ubiquinone. Couples the redox reaction to proton translocation (for every two electrons transferred, four hydrogen ions are translocated across the cytoplasmic membrane), and thus conserves the redox energy in a proton gradient. This Leptospira biflexa serovar Patoc (strain Patoc 1 / Ames) protein is NADH-quinone oxidoreductase subunit D.